Here is a 1387-residue protein sequence, read N- to C-terminus: DNA-directed RNA polymerase subunit beta'' (1387 aa).

The Zn(2+) site is built by cysteine 224, cysteine 295, cysteine 302, and cysteine 305.

Belongs to the RNA polymerase beta' chain family. RpoC2 subfamily. In terms of assembly, in plastids the minimal PEP RNA polymerase catalytic core is composed of four subunits: alpha, beta, beta', and beta''. When a (nuclear-encoded) sigma factor is associated with the core the holoenzyme is formed, which can initiate transcription. Zn(2+) is required as a cofactor.

The protein resides in the plastid. Its subcellular location is the chloroplast. The enzyme catalyses RNA(n) + a ribonucleoside 5'-triphosphate = RNA(n+1) + diphosphate. Its function is as follows. DNA-dependent RNA polymerase catalyzes the transcription of DNA into RNA using the four ribonucleoside triphosphates as substrates. In Panax ginseng (Korean ginseng), this protein is DNA-directed RNA polymerase subunit beta''.